The sequence spans 80 residues: UPF0270 protein VFMJ11_0205 (80 aa).

The protein belongs to the UPF0270 family.

The polypeptide is UPF0270 protein VFMJ11_0205 (Aliivibrio fischeri (strain MJ11) (Vibrio fischeri)).